Here is a 528-residue protein sequence, read N- to C-terminus: ATP synthase subunit alpha 1 (528 aa).

An ATP-binding site is contributed by 169–176 (GDRQTGKT).

This sequence belongs to the ATPase alpha/beta chains family. In terms of assembly, F-type ATPases have 2 components, CF(1) - the catalytic core - and CF(0) - the membrane proton channel. CF(1) has five subunits: alpha(3), beta(3), gamma(1), delta(1), epsilon(1). CF(0) has three main subunits: a(1), b(2) and c(9-12). The alpha and beta chains form an alternating ring which encloses part of the gamma chain. CF(1) is attached to CF(0) by a central stalk formed by the gamma and epsilon chains, while a peripheral stalk is formed by the delta and b chains.

The protein resides in the cell membrane. The enzyme catalyses ATP + H2O + 4 H(+)(in) = ADP + phosphate + 5 H(+)(out). In terms of biological role, produces ATP from ADP in the presence of a proton gradient across the membrane. The alpha chain is a regulatory subunit. The chain is ATP synthase subunit alpha 1 from Mycoplasmopsis pulmonis (strain UAB CTIP) (Mycoplasma pulmonis).